The sequence spans 371 residues: Otolith matrix protein 1 (371 aa).

The N-terminal stretch at 1–21 (MDLPGGHLAVVLFLFVLVSMS) is a signal peptide. In terms of domain architecture, Transferrin-like spans 27–367 (IRWCTVSDAE…YTTILRAFEC (341 aa)).

As to quaternary structure, interacts with OTOL1.

Its subcellular location is the secreted. Required for normal otolith growth and deposition of otolin-1 in the otolith. This Danio rerio (Zebrafish) protein is Otolith matrix protein 1 (otomp).